Here is a 1023-residue protein sequence, read N- to C-terminus: Phosphoenolpyruvate carboxylase (1023 aa).

Catalysis depends on residues His-199 and Lys-669.

This sequence belongs to the PEPCase type 1 family. Requires Mg(2+) as cofactor.

It carries out the reaction oxaloacetate + phosphate = phosphoenolpyruvate + hydrogencarbonate. In terms of biological role, forms oxaloacetate, a four-carbon dicarboxylic acid source for the tricarboxylic acid cycle. The polypeptide is Phosphoenolpyruvate carboxylase (Trichormus variabilis (strain ATCC 29413 / PCC 7937) (Anabaena variabilis)).